The chain runs to 45 residues: Scolopendra 20417.15 Da toxin (45 aa).

The disordered stretch occupies residues 26-45; the sequence is KVANGQEAGQPGAXNMKELH.

Belongs to the CRISP family. Venom allergen 5-like subfamily. In terms of processing, contains 3 disulfide bonds. As to expression, expressed by the venom gland.

It is found in the secreted. The sequence is that of Scolopendra 20417.15 Da toxin from Scolopendra viridicornis nigra (Brazilian giant centipede).